The sequence spans 107 residues: Large ribosomal subunit protein uL24 (107 aa).

It belongs to the universal ribosomal protein uL24 family. In terms of assembly, part of the 50S ribosomal subunit.

One of two assembly initiator proteins, it binds directly to the 5'-end of the 23S rRNA, where it nucleates assembly of the 50S subunit. In terms of biological role, one of the proteins that surrounds the polypeptide exit tunnel on the outside of the subunit. This chain is Large ribosomal subunit protein uL24, found in Natranaerobius thermophilus (strain ATCC BAA-1301 / DSM 18059 / JW/NM-WN-LF).